Here is a 213-residue protein sequence, read N- to C-terminus: Thiamine-phosphate synthase (213 aa).

Residues 40–44 (QFREK) and Asn-75 each bind 4-amino-2-methyl-5-(diphosphooxymethyl)pyrimidine. The Mg(2+) site is built by Asp-76 and Asp-95. Residue Ser-113 participates in 4-amino-2-methyl-5-(diphosphooxymethyl)pyrimidine binding. 139-141 (TPS) provides a ligand contact to 2-[(2R,5Z)-2-carboxy-4-methylthiazol-5(2H)-ylidene]ethyl phosphate. Lys-142 serves as a coordination point for 4-amino-2-methyl-5-(diphosphooxymethyl)pyrimidine. 2-[(2R,5Z)-2-carboxy-4-methylthiazol-5(2H)-ylidene]ethyl phosphate is bound by residues Gly-171 and 191–192 (IS).

This sequence belongs to the thiamine-phosphate synthase family. Mg(2+) is required as a cofactor.

It carries out the reaction 2-[(2R,5Z)-2-carboxy-4-methylthiazol-5(2H)-ylidene]ethyl phosphate + 4-amino-2-methyl-5-(diphosphooxymethyl)pyrimidine + 2 H(+) = thiamine phosphate + CO2 + diphosphate. It catalyses the reaction 2-(2-carboxy-4-methylthiazol-5-yl)ethyl phosphate + 4-amino-2-methyl-5-(diphosphooxymethyl)pyrimidine + 2 H(+) = thiamine phosphate + CO2 + diphosphate. The catalysed reaction is 4-methyl-5-(2-phosphooxyethyl)-thiazole + 4-amino-2-methyl-5-(diphosphooxymethyl)pyrimidine + H(+) = thiamine phosphate + diphosphate. It participates in cofactor biosynthesis; thiamine diphosphate biosynthesis; thiamine phosphate from 4-amino-2-methyl-5-diphosphomethylpyrimidine and 4-methyl-5-(2-phosphoethyl)-thiazole: step 1/1. In terms of biological role, condenses 4-methyl-5-(beta-hydroxyethyl)thiazole monophosphate (THZ-P) and 2-methyl-4-amino-5-hydroxymethyl pyrimidine pyrophosphate (HMP-PP) to form thiamine monophosphate (TMP). In Staphylococcus aureus (strain bovine RF122 / ET3-1), this protein is Thiamine-phosphate synthase.